A 238-amino-acid chain; its full sequence is EKC/KEOPS complex subunit SPAP27G11.07c (238 aa).

In terms of domain architecture, Protein kinase spans 20 to 238 (EKKLTVVKQG…MRGRKRTMIG (219 aa)). ATP contacts are provided by residues 26-34 (VKQGAEAIT) and Lys-48. Asp-148 (proton acceptor) is an active-site residue.

This sequence belongs to the protein kinase superfamily. BUD32 family. Component of the EKC/KEOPS complex composed of at least SPAP27G11.07c/BUD32, cgi121, gon7, pgp2 and SPAC4H3.13/PCC1; the whole complex dimerizes.

The protein localises to the cytoplasm. It is found in the nucleus. Its subcellular location is the chromosome. The protein resides in the telomere. The catalysed reaction is L-seryl-[protein] + ATP = O-phospho-L-seryl-[protein] + ADP + H(+). It carries out the reaction L-threonyl-[protein] + ATP = O-phospho-L-threonyl-[protein] + ADP + H(+). In terms of biological role, component of the EKC/KEOPS complex that is required for the formation of a threonylcarbamoyl group on adenosine at position 37 (t(6)A37) in tRNAs that read codons beginning with adenine. The complex is probably involved in the transfer of the threonylcarbamoyl moiety of threonylcarbamoyl-AMP (TC-AMP) to the N6 group of A37. BUD32 has ATPase activity in the context of the EKC/KEOPS complex and likely plays a supporting role to the catalytic subunit KAE1. The EKC/KEOPS complex also promotes both telomere uncapping and telomere elongation. The complex is required for efficient recruitment of transcriptional coactivators. In Schizosaccharomyces pombe (strain 972 / ATCC 24843) (Fission yeast), this protein is EKC/KEOPS complex subunit SPAP27G11.07c.